The chain runs to 469 residues: Arginine biosynthesis bifunctional protein ArgJ, mitochondrial (469 aa).

The substrate site is built by Thr-199, Lys-228, Thr-239, Glu-325, Asn-464, and Thr-469. The active-site Nucleophile is Thr-239.

It belongs to the ArgJ family. Heterodimer of an alpha and a beta chain. The alpha and beta chains are autoproteolytically processed from a single precursor protein within the mitochondrion.

Its subcellular location is the mitochondrion matrix. It catalyses the reaction N(2)-acetyl-L-ornithine + L-glutamate = N-acetyl-L-glutamate + L-ornithine. It carries out the reaction L-glutamate + acetyl-CoA = N-acetyl-L-glutamate + CoA + H(+). It participates in amino-acid biosynthesis; L-arginine biosynthesis; L-ornithine and N-acetyl-L-glutamate from L-glutamate and N(2)-acetyl-L-ornithine (cyclic): step 1/1. Its pathway is amino-acid biosynthesis; L-arginine biosynthesis; N(2)-acetyl-L-ornithine from L-glutamate: step 1/4. Functionally, catalyzes two activities which are involved in the cyclic version of arginine biosynthesis: the synthesis of acetylglutamate from glutamate and acetyl-CoA, and of ornithine by transacetylation between acetylornithine and glutamate. The polypeptide is Arginine biosynthesis bifunctional protein ArgJ, mitochondrial (Sordaria macrospora (strain ATCC MYA-333 / DSM 997 / K(L3346) / K-hell)).